A 254-amino-acid polypeptide reads, in one-letter code: Ribosomal RNA small subunit methyltransferase G (254 aa).

The disordered stretch occupies residues 1-21; sequence MPEGDGVPRETPSPSVVPESP. Over residues 9–21 the composition is skewed to low complexity; sequence RETPSPSVVPESP. S-adenosyl-L-methionine-binding positions include Gly90, Leu95, 142–143, and Arg157; that span reads AE. Residues 230-254 form a disordered region; sequence GPLRAATAPAPPGAAKRRPGKGNRR. The span at 244–254 shows a compositional bias: basic residues; sequence AKRRPGKGNRR.

Belongs to the methyltransferase superfamily. RNA methyltransferase RsmG family.

The protein localises to the cytoplasm. Functionally, specifically methylates the N7 position of guanine in position 518 of 16S rRNA. This is Ribosomal RNA small subunit methyltransferase G from Kineococcus radiotolerans (strain ATCC BAA-149 / DSM 14245 / SRS30216).